The chain runs to 321 residues: MIDFRPFYQQIATTNLSDWLETLPLQLKEWETQTHGDYAKWSKIVDFLPDLHADEIDLKSAVKSDRTSPLSEGEKQRIIHHLKQLMPWRKGPYHLFGIHVDCEWRSDFKWDRVLPHLAPLQGRTILDVGCGSGYHMWRMVGEGAKMVVGIDPTELFLCQFEAVRKLLNNDRRANLIPLGIEQMQPLAAFDTVFSMGVLYHRKSPLDHLSQLKNQLVKGGELVLETLVVDGDVNTVLVPIDRYAKMKNVYFIPSVAALINWLEKVGFTNVRCVDVATTTLEEQRKTDWLENESLIDFLDPNDHSKTIEGYHAPKRAVILANK.

Residues K90, W104, K109, G129, 151-153 (DPT), 180-181 (IE), M195, Y199, and R314 contribute to the carboxy-S-adenosyl-L-methionine site.

Belongs to the class I-like SAM-binding methyltransferase superfamily. CmoB family. As to quaternary structure, homotetramer.

It catalyses the reaction carboxy-S-adenosyl-L-methionine + 5-hydroxyuridine(34) in tRNA = 5-carboxymethoxyuridine(34) in tRNA + S-adenosyl-L-homocysteine + H(+). Catalyzes carboxymethyl transfer from carboxy-S-adenosyl-L-methionine (Cx-SAM) to 5-hydroxyuridine (ho5U) to form 5-carboxymethoxyuridine (cmo5U) at position 34 in tRNAs. The protein is tRNA U34 carboxymethyltransferase of Haemophilus influenzae (strain PittGG).